The sequence spans 323 residues: Transposase for insertion sequence element IS6120 (323 aa).

Residues 300–323 (ERPTDITPPTSPSDGGQHAGTEVA) form a disordered region. Positions 304-313 (DITPPTSPSD) are enriched in low complexity.

Belongs to the transposase mutator family.

In terms of biological role, required for the transposition of the insertion element. In Mycolicibacterium smegmatis (Mycobacterium smegmatis), this protein is Transposase for insertion sequence element IS6120.